A 480-amino-acid polypeptide reads, in one-letter code: 3,6-anhydro-alpha-L-galactose dehydrogenase (480 aa).

NADP(+)-binding positions include Trp-149–Asn-150, Lys-173–Ser-176, and Gly-226–Ser-227. Glu-248 acts as the Proton acceptor in catalysis. Leu-249 serves as a coordination point for NADP(+). The Nucleophile role is filled by Cys-282. Residue Glu-383 participates in NADP(+) binding.

Belongs to the aldehyde dehydrogenase family.

The enzyme catalyses 3,6-anhydro-alpha-L-galactopyranose + NADP(+) + H2O = 3,6-anhydro-L-galactonate + NADPH + 2 H(+). It catalyses the reaction 3,6-anhydro-alpha-L-galactopyranose + NAD(+) + H2O = 3,6-anhydro-L-galactonate + NADH + 2 H(+). Its function is as follows. Involved in the degradation of 3,6-anhydro-L-galactose, which is the major monomeric sugar of red macroalgae. Catalyzes the oxidation of 3,6-anhydro-L-galactose (AHG) to form 3,6-anhydrogalactonate (AHGA). The protein is 3,6-anhydro-alpha-L-galactose dehydrogenase of Vibrio sp. (strain EJY3).